The following is a 74-amino-acid chain: DUP240 protein DFP2 (74 aa).

The protein belongs to the DUP/COS family.

Its subcellular location is the cytoplasm. The protein localises to the membrane. In Saccharomyces cerevisiae (strain ATCC 204508 / S288c) (Baker's yeast), this protein is DUP240 protein DFP2.